The chain runs to 206 residues: Dephospho-CoA kinase (206 aa).

Residues 4–204 (VIGLTGGIAS…EGYIESHSED (201 aa)) form the DPCK domain. 12-17 (ASGKST) serves as a coordination point for ATP.

The protein belongs to the CoaE family.

It localises to the cytoplasm. It catalyses the reaction 3'-dephospho-CoA + ATP = ADP + CoA + H(+). It functions in the pathway cofactor biosynthesis; coenzyme A biosynthesis; CoA from (R)-pantothenate: step 5/5. Functionally, catalyzes the phosphorylation of the 3'-hydroxyl group of dephosphocoenzyme A to form coenzyme A. In Staphylococcus saprophyticus subsp. saprophyticus (strain ATCC 15305 / DSM 20229 / NCIMB 8711 / NCTC 7292 / S-41), this protein is Dephospho-CoA kinase.